Here is a 147-residue protein sequence, read N- to C-terminus: Large ribosomal subunit protein bL9 (147 aa).

The disordered stretch occupies residues 44–63 (VKTLDAQKRSEDKRKEQEKL). The span at 48-63 (DAQKRSEDKRKEQEKL) shows a compositional bias: basic and acidic residues.

This sequence belongs to the bacterial ribosomal protein bL9 family.

Functionally, binds to the 23S rRNA. The protein is Large ribosomal subunit protein bL9 of Brevibacillus brevis (strain 47 / JCM 6285 / NBRC 100599).